The following is a 122-amino-acid chain: UPF0102 protein BARBAKC583_1042 (122 aa).

The protein belongs to the UPF0102 family.

The protein is UPF0102 protein BARBAKC583_1042 of Bartonella bacilliformis (strain ATCC 35685 / KC583 / Herrer 020/F12,63).